A 1313-amino-acid chain; its full sequence is Inactive protein tyrosine kinase pTKL (1313 aa).

MORN repeat units lie at residues 20–42 (YAGD…ENGN) and 45–63 (FGHF…IDKN). N-linked (GlcNAc...) asparagine glycans are attached at residues N63, N131, N178, N208, N254, N260, and N288. The SAM domain maps to 300-365 (WNKEQVAQWL…LQLIKNLRVT (66 aa)). N-linked (GlcNAc...) asparagine glycans are attached at residues N466, N516, N525, N528, and N534. The segment covering 569-580 (EPIKPNKEKEEN) has biased composition (basic and acidic residues). Residues 569-631 (EPIKPNKEKE…SEKSSETSSE (63 aa)) form a disordered region. Residues 586–604 (PIINSKNETNLLNDSNPTK) are compositionally biased toward polar residues. 7 N-linked (GlcNAc...) asparagine glycosylation sites follow: N592, N598, N661, N678, N729, N735, and N749. K782 is an ATP binding site. N-linked (GlcNAc...) asparagine glycans are attached at residues N790, N868, N940, N983, and N1000. The Protein kinase domain maps to 962–1294 (FRNKNNILCG…FDRILIEISM (333 aa)). The RVxF motif motif lies at 1052-1055 (KILF). Residues N1191 and N1198 are each glycosylated (N-linked (GlcNAc...) asparagine).

It belongs to the protein kinase superfamily. TKL Ser/Thr protein kinase family.

It is found in the parasitophorous vacuole. Its subcellular location is the host cell membrane. It localises to the host cytoplasm. The protein localises to the host cytoskeleton. In Plasmodium berghei (strain Anka), this protein is Inactive protein tyrosine kinase pTKL.